We begin with the raw amino-acid sequence, 148 residues long: FAD synthase (148 aa).

Residues 14–15, 19–22, and D100 contribute to the ATP site; these read VF and HVGH.

The protein belongs to the archaeal FAD synthase family. As to quaternary structure, homodimer. The cofactor is a divalent metal cation.

The enzyme catalyses FMN + ATP + H(+) = FAD + diphosphate. It participates in cofactor biosynthesis; FAD biosynthesis; FAD from FMN: step 1/1. In terms of biological role, catalyzes the transfer of the AMP portion of ATP to flavin mononucleotide (FMN) to produce flavin adenine dinucleotide (FAD) coenzyme. The polypeptide is FAD synthase (Thermococcus sibiricus (strain DSM 12597 / MM 739)).